The following is a 284-amino-acid chain: Tropomyosin (284 aa).

Residues 1–284 (MDAIKKKMVA…DATFAELAGY (284 aa)) are a coiled coil. Positions 32-41 (TEEAKAKIED) are enriched in basic and acidic residues. The interval 32–60 (TEEAKAKIEDDYNSLQKKSIQTENDLDNT) is disordered. Residues 44–60 (NSLQKKSIQTENDLDNT) show a composition bias toward polar residues.

It belongs to the tropomyosin family. Homodimer.

Tropomyosin, in association with the troponin complex, plays a central role in the calcium dependent regulation of muscle contraction. The chain is Tropomyosin from Mytilus edulis (Blue mussel).